The chain runs to 1029 residues: Tyrosine-protein kinase-like otk (1029 aa).

The first 18 residues, Met-1–Ala-18, serve as a signal peptide directing secretion. Residues Ser-19–Ala-577 lie on the Extracellular side of the membrane. 5 Ig-like C2-type domains span residues Ser-21–Ser-104, Pro-105–Ser-195, Pro-247–Ser-361, Pro-364–Asn-459, and Pro-464–Val-554. An N-linked (GlcNAc...) asparagine glycan is attached at Asn-35. 4 disulfide bridges follow: Cys-42–Cys-91, Cys-133–Cys-184, Cys-272–Cys-350, and Cys-395–Cys-443. Asn-332, Asn-413, Asn-425, Asn-440, Asn-453, Asn-508, and Asn-520 each carry an N-linked (GlcNAc...) asparagine glycan. Cys-486 and Cys-538 are disulfide-bonded. A helical membrane pass occupies residues Val-578–Trp-598. Residues Cys-599–Lys-1029 are Cytoplasmic-facing. 2 disordered regions span residues Leu-613 to Ala-675 and Ser-714 to Met-756. Polar residues predominate over residues Lys-651–Arg-669. Ser-674 is modified (phosphoserine). One can recognise a Protein kinase; inactive domain in the interval Leu-688 to Met-1024. The span at Ser-716 to Ser-727 shows a compositional bias: basic and acidic residues.

Belongs to the protein kinase superfamily. Tyr protein kinase family. Insulin receptor subfamily. Interacts with plexA; component of a receptor complex that mediates the repulsive signaling in response to Semaphorin ligands.

The protein resides in the cell membrane. Acts as a calcium-dependent, homophilic cell adhesion molecule that regulates neural recognition during the development of the nervous system. Component of the repulsive Plexin signaling response to regulate motor axon guidance at the embryonic stage. Also component of a receptor complex that is required in the adult visual system to innervate the lamina layer; specific targeting of R1-R6 axons. The chain is Tyrosine-protein kinase-like otk from Drosophila sechellia (Fruit fly).